The chain runs to 634 residues: Poly(ribitol-phosphate) beta-glucosyltransferase (634 aa).

Belongs to the glycosyltransferase 2 family.

The catalysed reaction is 4-O-[(D-ribitylphospho)(n)-D-ribitylphospho-(2R)-glycerylphospho]-N-acetyl-beta-D-mannosaminyl-(1-&gt;4)-N-acetyl-alpha-D-glucosaminyl di-trans,octa-cis-undecaprenyl diphosphate + n UDP-alpha-D-glucose = 4-O-[(2-beta-D-glucosyl-D-ribitylphospho)(n)-D-ribitylphospho-(2R)-glycerylphospho]-N-acetyl-beta-D-mannosaminyl-(1-&gt;4)-N-acetyl-alpha-D-glucosaminyl di-trans,octa-cis-undecaprenyl diphosphate + n UDP + n H(+). It participates in cell wall biogenesis; poly(ribitol phosphate) teichoic acid biosynthesis. Functionally, attaches glucose residues to poly(RboP)-wall teichoic acids (WTAs). The protein is Poly(ribitol-phosphate) beta-glucosyltransferase of Bacillus spizizenii (strain ATCC 23059 / NRRL B-14472 / W23) (Bacillus subtilis subsp. spizizenii).